The following is a 158-amino-acid chain: Large ribosomal subunit protein mL50 (158 aa).

The protein belongs to the mitochondrion-specific ribosomal protein mL50 family. Component of the mitochondrial ribosome large subunit (39S) which comprises a 16S rRNA and about 50 distinct proteins.

It localises to the mitochondrion. The polypeptide is Large ribosomal subunit protein mL50 (MRPL50) (Pongo abelii (Sumatran orangutan)).